The primary structure comprises 123 residues: Small ribosomal subunit protein uS12c (123 aa).

Polar residues predominate over residues 1-16; that stretch reads MPTIQQLIRNSRQPAE. A disordered region spans residues 1–23; that stretch reads MPTIQQLIRNSRQPAENRTKSPA.

Belongs to the universal ribosomal protein uS12 family. As to quaternary structure, part of the 30S ribosomal subunit.

It localises to the plastid. It is found in the chloroplast. With S4 and S5 plays an important role in translational accuracy. Located at the interface of the 30S and 50S subunits. This Staurastrum punctulatum (Green alga) protein is Small ribosomal subunit protein uS12c (rps12).